A 513-amino-acid chain; its full sequence is 2-isopropylmalate synthase (513 aa).

A Pyruvate carboxyltransferase domain is found at 4 to 266 (IEFFDTSLRD…QSPLKLSETA (263 aa)). Positions 13, 201, 203, and 237 each coordinate Mn(2+). A regulatory domain region spans residues 390-513 (ILDNVQIDGH…VEQISAHDGI (124 aa)).

This sequence belongs to the alpha-IPM synthase/homocitrate synthase family. LeuA type 1 subfamily. As to quaternary structure, homodimer. The cofactor is Mn(2+).

Its subcellular location is the cytoplasm. The enzyme catalyses 3-methyl-2-oxobutanoate + acetyl-CoA + H2O = (2S)-2-isopropylmalate + CoA + H(+). It participates in amino-acid biosynthesis; L-leucine biosynthesis; L-leucine from 3-methyl-2-oxobutanoate: step 1/4. In terms of biological role, catalyzes the condensation of the acetyl group of acetyl-CoA with 3-methyl-2-oxobutanoate (2-ketoisovalerate) to form 3-carboxy-3-hydroxy-4-methylpentanoate (2-isopropylmalate). The polypeptide is 2-isopropylmalate synthase (Lactococcus lactis subsp. lactis (strain IL1403) (Streptococcus lactis)).